An 827-amino-acid chain; its full sequence is Periplasmic nitrate reductase (827 aa).

The tat-type signal signal peptide spans 1–32 (MELSRRDFMKANAAVAAAAAAGIVLPVKNVQA). The region spanning 37–93 (IKWDKAPCRFCGTGCSVLVGTKDGRVVATQGDPDAEVNRGLNCIKGYFLSKIMYGAD) is the 4Fe-4S Mo/W bis-MGD-type domain. [4Fe-4S] cluster is bound by residues cysteine 44, cysteine 47, cysteine 51, and cysteine 79. Residues lysine 81, glutamine 148, asparagine 173, cysteine 177, 210-217 (WGSNMAEM), 241-245 (STFEH), methionine 371, glutamine 375, asparagine 481, 507-508 (SD), lysine 530, aspartate 557, and 717-726 (TGRVLEHWHT) contribute to the Mo-bis(molybdopterin guanine dinucleotide) site. A substrate-binding site is contributed by phenylalanine 793. Mo-bis(molybdopterin guanine dinucleotide) is bound by residues asparagine 801 and lysine 818.

The protein belongs to the prokaryotic molybdopterin-containing oxidoreductase family. NasA/NapA/NarB subfamily. In terms of assembly, component of the periplasmic nitrate reductase NapAB complex composed of NapA and NapB. [4Fe-4S] cluster serves as cofactor. The cofactor is Mo-bis(molybdopterin guanine dinucleotide). In terms of processing, predicted to be exported by the Tat system. The position of the signal peptide cleavage has not been experimentally proven.

The protein resides in the periplasm. It carries out the reaction 2 Fe(II)-[cytochrome] + nitrate + 2 H(+) = 2 Fe(III)-[cytochrome] + nitrite + H2O. Functionally, catalytic subunit of the periplasmic nitrate reductase complex NapAB. Receives electrons from NapB and catalyzes the reduction of nitrate to nitrite. This Haemophilus ducreyi (strain 35000HP / ATCC 700724) protein is Periplasmic nitrate reductase.